We begin with the raw amino-acid sequence, 617 residues long: UvrABC system protein C (617 aa).

Positions 22–100 (KLPGVYRFFD…IKALSPKYNI (79 aa)) constitute a GIY-YIG domain. The UVR domain maps to 209–244 (DELTRTLQHKMQTAAANLQFEEAARYRDQIQALGIM).

Belongs to the UvrC family. In terms of assembly, interacts with UvrB in an incision complex.

It localises to the cytoplasm. Its function is as follows. The UvrABC repair system catalyzes the recognition and processing of DNA lesions. UvrC both incises the 5' and 3' sides of the lesion. The N-terminal half is responsible for the 3' incision and the C-terminal half is responsible for the 5' incision. The protein is UvrABC system protein C of Neisseria meningitidis serogroup A / serotype 4A (strain DSM 15465 / Z2491).